The following is a 271-amino-acid chain: PA-phosphatase related-family protein DDB_G0284367 (271 aa).

The next 6 membrane-spanning stretches (helical) occupy residues F23 to F43, I68 to G88, A102 to V122, F150 to C170, G181 to V201, and F211 to M231.

The protein belongs to the PA-phosphatase related phosphoesterase family.

It is found in the membrane. The chain is PA-phosphatase related-family protein DDB_G0284367 from Dictyostelium discoideum (Social amoeba).